Here is a 715-residue protein sequence, read N- to C-terminus: MDLKKTVLCESLIIWLQTFKTAAPCKTVEDLTSGAAMSQALHQIDPSWFSESWLARIKEDVGDNVRLKMNNLKKILQMIVDYYNEVLAQQMSDFPLPDLMRVVEQSDQVELGRLLQLILGCAVKCDRKQEYIQIIMTLEESVQHVVMTAIQELMSRESVSQLGAEPAGDTEQQLKKALEDLTEVMAEKEELAQRCQELDMQVTVLQEERNSLLAENDLLTDRSSQLETFDDPSTPSGRKHSQLQFQLEQLQEENFRLEAAKDDYRIHCEELEKQLVELQHRNDELTSLAEESRSLKDELDILRSCSDRAVKLEASVETYRKKLEDLSDLRRQMKALEEKNMTYMHNTVSLEEELRKANAARAQLETYKRQVQELHKKLSDESRRADNLVFEMKKLQEKYDALVKERERISIERDTLRETNEELRCTQAQQDQLLLAGKYQTGSPSHDNLAAEMLPIEYREKFIRLQHENKMLRLQQEESEKQRITELQQQLEEARRGRSQLDTDNRLNRERISELQQQVEDLQKALQTQGAKPDDSHLKRKLDAHMVQLNEAQDEIMKKKELLEDLQPDATQTSVKMDELMAALKKKDEDMRAMEDRYKMYLEKARDVIRALDPKLNPASAEIQSLKVQLSDKDKKIIALERECEQAKLREYEEKLIVTAWYNKSLNFQKMAIESRLSGRANSLVPPGQSFLAQQRQVTNARRTMSINVPASSSK.

Residues 6–122 enclose the Calponin-homology (CH) domain; that stretch reads TVLCESLIIW…RLLQLILGCA (117 aa). 2 coiled-coil regions span residues 167–434 and 463–656; these read AGDT…DQLL and IRLQ…EEKL.

It belongs to the hook family. In terms of assembly, interacts with microtubules.

The protein localises to the cytoplasm. The protein resides in the cytoskeleton. May function to promote vesicle trafficking and/or fusion. This is Protein Hook homolog 1 (hook1) from Danio rerio (Zebrafish).